Consider the following 251-residue polypeptide: Hydroxyacylglutathione hydrolase (251 aa).

7 residues coordinate Zn(2+): His-53, His-55, Asp-57, His-58, His-110, Asp-127, and His-165.

It belongs to the metallo-beta-lactamase superfamily. Glyoxalase II family. As to quaternary structure, monomer. Requires Zn(2+) as cofactor.

The enzyme catalyses an S-(2-hydroxyacyl)glutathione + H2O = a 2-hydroxy carboxylate + glutathione + H(+). The protein operates within secondary metabolite metabolism; methylglyoxal degradation; (R)-lactate from methylglyoxal: step 2/2. Its function is as follows. Thiolesterase that catalyzes the hydrolysis of S-D-lactoyl-glutathione to form glutathione and D-lactic acid. The protein is Hydroxyacylglutathione hydrolase of Citrobacter koseri (strain ATCC BAA-895 / CDC 4225-83 / SGSC4696).